The primary structure comprises 244 residues: MIRTDAKDGALVLFSGGQDSATCVAWALERYQTVETLGFDYGQRHRVELECREGVRDALKRRFPQWSHKLGDDHMIDLSVLGAISDTAMTRAIEIETASNGLPNTFVPGRNLLFMTIGAAIAYRRGLRALVGGMCETDFSGYPDCRDDTMKALQVALNLGMDTRFVLETPLMWLDKADTWRLAEQLGGKPLVELIRVETHTCYVGERSELHDWGFGCGECPACKLRKRGFEAYLRGESVTQAPV.

An ATP-binding site is contributed by 14 to 24 (FSGGQDSATCV). Residues C202, C217, C220, and C223 each coordinate Zn(2+).

Belongs to the QueC family. It depends on Zn(2+) as a cofactor.

It carries out the reaction 7-carboxy-7-deazaguanine + NH4(+) + ATP = 7-cyano-7-deazaguanine + ADP + phosphate + H2O + H(+). The protein operates within purine metabolism; 7-cyano-7-deazaguanine biosynthesis. Its function is as follows. Catalyzes the ATP-dependent conversion of 7-carboxy-7-deazaguanine (CDG) to 7-cyano-7-deazaguanine (preQ(0)). The chain is 7-cyano-7-deazaguanine synthase from Burkholderia thailandensis (strain ATCC 700388 / DSM 13276 / CCUG 48851 / CIP 106301 / E264).